We begin with the raw amino-acid sequence, 149 residues long: D-aminoacyl-tRNA deacylase (149 aa).

The Gly-cisPro motif, important for rejection of L-amino acids motif lies at 141-142; sequence GP.

It belongs to the DTD family. As to quaternary structure, homodimer.

The protein localises to the cytoplasm. It catalyses the reaction glycyl-tRNA(Ala) + H2O = tRNA(Ala) + glycine + H(+). The enzyme catalyses a D-aminoacyl-tRNA + H2O = a tRNA + a D-alpha-amino acid + H(+). Functionally, an aminoacyl-tRNA editing enzyme that deacylates mischarged D-aminoacyl-tRNAs. Also deacylates mischarged glycyl-tRNA(Ala), protecting cells against glycine mischarging by AlaRS. Acts via tRNA-based rather than protein-based catalysis; rejects L-amino acids rather than detecting D-amino acids in the active site. By recycling D-aminoacyl-tRNA to D-amino acids and free tRNA molecules, this enzyme counteracts the toxicity associated with the formation of D-aminoacyl-tRNA entities in vivo and helps enforce protein L-homochirality. This chain is D-aminoacyl-tRNA deacylase, found in Streptomyces griseus subsp. griseus (strain JCM 4626 / CBS 651.72 / NBRC 13350 / KCC S-0626 / ISP 5235).